We begin with the raw amino-acid sequence, 433 residues long: Trigger factor (433 aa).

In terms of domain architecture, PPIase FKBP-type spans glycine 163–proline 248.

It belongs to the FKBP-type PPIase family. Tig subfamily.

The protein localises to the cytoplasm. The catalysed reaction is [protein]-peptidylproline (omega=180) = [protein]-peptidylproline (omega=0). In terms of biological role, involved in protein export. Acts as a chaperone by maintaining the newly synthesized protein in an open conformation. Functions as a peptidyl-prolyl cis-trans isomerase. This Staphylococcus aureus (strain Newman) protein is Trigger factor.